Reading from the N-terminus, the 222-residue chain is Chorionic somatomammotropin hormone-like 1 (222 aa).

The first 26 residues, 1–26 (MAAGSRTSLLLAFALLCLPWLQEAGA), serve as a signal peptide directing secretion. Zn(2+) contacts are provided by H44 and E205. The cysteines at positions 213 and 220 are disulfide-linked.

This sequence belongs to the somatotropin/prolactin family.

It localises to the secreted. In terms of biological role, may be a novel gestational hormone required to compensate for absence of other members of the GH/CS cluster during gestation. This Homo sapiens (Human) protein is Chorionic somatomammotropin hormone-like 1 (CSHL1).